Reading from the N-terminus, the 268-residue chain is Phosphatidylglycerol--prolipoprotein diacylglyceryl transferase (268 aa).

The next 7 helical transmembrane spans lie at 10-30 (VALA…LIGI), 56-76 (LVFW…VLFY), 92-112 (WKGG…ALWF), 120-140 (FFEL…AGRI), 174-194 (PSQL…LWLF), 202-222 (MAVS…VEFV), and 236-256 (WLTM…GLIW). Arginine 139 provides a ligand contact to a 1,2-diacyl-sn-glycero-3-phospho-(1'-sn-glycerol).

The protein belongs to the Lgt family.

The protein localises to the cell inner membrane. The catalysed reaction is L-cysteinyl-[prolipoprotein] + a 1,2-diacyl-sn-glycero-3-phospho-(1'-sn-glycerol) = an S-1,2-diacyl-sn-glyceryl-L-cysteinyl-[prolipoprotein] + sn-glycerol 1-phosphate + H(+). It participates in protein modification; lipoprotein biosynthesis (diacylglyceryl transfer). Functionally, catalyzes the transfer of the diacylglyceryl group from phosphatidylglycerol to the sulfhydryl group of the N-terminal cysteine of a prolipoprotein, the first step in the formation of mature lipoproteins. This is Phosphatidylglycerol--prolipoprotein diacylglyceryl transferase from Pseudomonas putida (strain ATCC 700007 / DSM 6899 / JCM 31910 / BCRC 17059 / LMG 24140 / F1).